We begin with the raw amino-acid sequence, 98 residues long: Cystatin-B (98 aa).

At Met1 the chain carries N-acetylmethionine. A Secondary area of contact motif is present at residues 46–50 (QVVAG).

The protein belongs to the cystatin family. In terms of assembly, able to form dimers stabilized by noncovalent forces.

The protein resides in the cytoplasm. Its subcellular location is the nucleus. This is an intracellular thiol proteinase inhibitor. Tightly binding reversible inhibitor of cathepsins L, H and B. This chain is Cystatin-B (CSTB), found in Macaca fuscata fuscata (Japanese macaque).